The following is a 487-amino-acid chain: MNTLKDIKIKNIKYYHTDDIIGLKLSQFKSCTNGRRLISNLNIDDNNYIFATNKSGKWIETDGKSRKFDKVLIKVSWIKENILDDDENDNENDNENDVENENDVENENDDENENDDDDDENDDDDDEIIMAPGIIKLNKNEKIRDDKNKIVDIEVRGTRDPRNCFFKASDVSKGFGMKNLSDTISRSSGYKLGIHYRYFYLQKNTDSIRKKNKIKKIKKIYLTYEGLLRVMFVSKNDRVSRFIMWATNTLFTAHLGTKEQKNMLSSKLMGITTDIVKEVFNKTSSTLPTLYLFTIGKVKDLRVTLDIGEEYDDECIVAKGGETIDLTRRIDEHTESYGKMPGAKLLLKSYNYIDPQYTSKAETDLFQVLKKMNYIFKHPKYKEIIIYTKKESDLITKEFSKIARDYTGHIKEISDKLKCFENQYNIMKLEYEKEIANKEKEIMQLEKENSDLKYQNEIIELKYKNKLLEKDRKIAKLEKNIKKSGLK.

The interval 84–125 is disordered; it reads DDDENDNENDNENDVENENDVENENDDENENDDDDDENDDDD. Residues 410-485 are a coiled coil; it reads IKEISDKLKC…KLEKNIKKSG (76 aa).

Belongs to the mimivirus L5 family.

This is an uncharacterized protein from Acanthamoeba polyphaga (Amoeba).